The chain runs to 176 residues: Ferritin heavy chain B (176 aa).

In terms of domain architecture, Ferritin-like diiron spans 7 to 156 (QNFNSDCEAA…DYITNLKRLG (150 aa)). Fe cation-binding residues include Glu-24, Glu-59, His-62, Glu-104, and Gln-138.

Belongs to the ferritin family. Oligomer of 24 subunits. There are two types of subunits: L (light) chain and H (heavy) chain. The functional molecule is roughly spherical and contains a central cavity into which the insoluble mineral iron core is deposited.

Its subcellular location is the cytoplasm. The enzyme catalyses 4 Fe(2+) + O2 + 4 H(+) = 4 Fe(3+) + 2 H2O. In terms of biological role, stores iron in a soluble, non-toxic, readily available form. Important for iron homeostasis. Has ferroxidase activity. Iron is taken up in the ferrous form and deposited as ferric hydroxides after oxidation. The sequence is that of Ferritin heavy chain B (fth1-b) from Xenopus laevis (African clawed frog).